Consider the following 172-residue polypeptide: Adenine phosphoribosyltransferase (172 aa).

The protein belongs to the purine/pyrimidine phosphoribosyltransferase family. Homodimer.

The protein resides in the cytoplasm. It carries out the reaction AMP + diphosphate = 5-phospho-alpha-D-ribose 1-diphosphate + adenine. The protein operates within purine metabolism; AMP biosynthesis via salvage pathway; AMP from adenine: step 1/1. Functionally, catalyzes a salvage reaction resulting in the formation of AMP, that is energically less costly than de novo synthesis. The sequence is that of Adenine phosphoribosyltransferase from Staphylococcus carnosus (strain TM300).